Reading from the N-terminus, the 99-residue chain is Large ribosomal subunit protein bL27 (99 aa).

The propeptide occupies 1–10 (MKLIFDIQLF).

The protein belongs to the bacterial ribosomal protein bL27 family. The N-terminus is cleaved by ribosomal processing cysteine protease Prp.

This chain is Large ribosomal subunit protein bL27, found in Caldicellulosiruptor saccharolyticus (strain ATCC 43494 / DSM 8903 / Tp8T 6331).